Here is a 200-residue protein sequence, read N- to C-terminus: NADH-quinone oxidoreductase subunit C (200 aa).

Belongs to the complex I 30 kDa subunit family. NDH-1 is composed of 14 different subunits. Subunits NuoB, C, D, E, F, and G constitute the peripheral sector of the complex.

Its subcellular location is the cell inner membrane. The enzyme catalyses a quinone + NADH + 5 H(+)(in) = a quinol + NAD(+) + 4 H(+)(out). NDH-1 shuttles electrons from NADH, via FMN and iron-sulfur (Fe-S) centers, to quinones in the respiratory chain. The immediate electron acceptor for the enzyme in this species is believed to be ubiquinone. Couples the redox reaction to proton translocation (for every two electrons transferred, four hydrogen ions are translocated across the cytoplasmic membrane), and thus conserves the redox energy in a proton gradient. This Parvibaculum lavamentivorans (strain DS-1 / DSM 13023 / NCIMB 13966) protein is NADH-quinone oxidoreductase subunit C.